Here is a 456-residue protein sequence, read N- to C-terminus: Acid sphingomyelinase-like phosphodiesterase 3b (456 aa).

The signal sequence occupies residues 1 to 18 (MTLLGWLIFLAPWGVAGA). Residues Asp28 and His30 each contribute to the Zn(2+) site. Asn34 carries an N-linked (GlcNAc...) asparagine glycan. A disulfide bridge links Cys45 with Cys64. Residue Asn72 is glycosylated (N-linked (GlcNAc...) asparagine). Residue Asp93 participates in Zn(2+) binding. An N-linked (GlcNAc...) asparagine glycan is attached at Asn100. Asn134 contacts Zn(2+). 2 N-linked (GlcNAc...) asparagine glycosylation sites follow: Asn164 and Asn223. Zn(2+) contacts are provided by His236, His277, and His279. Cystine bridges form between Cys405–Cys409 and Cys415–Cys428.

Belongs to the acid sphingomyelinase family. Interacts with TLR4, TLR7, TLR8 and TLR9. Zn(2+) is required as a cofactor. In terms of processing, N-glycosylated. As to expression, macrophages and dendritic cells.

It is found in the secreted. The protein localises to the cell membrane. Its function is as follows. Lipid-modulating phosphodiesterase. Active on the surface of macrophages and dendritic cells and strongly influences macrophage lipid composition and membrane fluidity. Acts as a negative regulator of Toll-like receptor signaling. Has in vitro phosphodiesterase activity, but the physiological substrate is unknown. Lacks activity with phosphocholine-containing lipids, but can cleave CDP-choline, and can release phosphate from ATP and ADP (in vitro). This chain is Acid sphingomyelinase-like phosphodiesterase 3b (Smpdl3b), found in Mus musculus (Mouse).